A 270-amino-acid polypeptide reads, in one-letter code: Acyl-[acyl-carrier-protein]--UDP-N-acetylglucosamine O-acyltransferase (270 aa).

Substrate contacts are provided by residues 69-72 (QDLK), His121, His140, and Gln157.

It belongs to the transferase hexapeptide repeat family. LpxA subfamily. As to quaternary structure, homotrimer.

The protein localises to the cytoplasm. The enzyme catalyses a (3R)-hydroxyacyl-[ACP] + UDP-N-acetyl-alpha-D-glucosamine = a UDP-3-O-[(3R)-3-hydroxyacyl]-N-acetyl-alpha-D-glucosamine + holo-[ACP]. It functions in the pathway glycolipid biosynthesis; lipid IV(A) biosynthesis; lipid IV(A) from (3R)-3-hydroxytetradecanoyl-[acyl-carrier-protein] and UDP-N-acetyl-alpha-D-glucosamine: step 1/6. Its function is as follows. Involved in the biosynthesis of lipid A, a phosphorylated glycolipid that anchors the lipopolysaccharide to the outer membrane of the cell. This Helicobacter pylori (strain ATCC 700392 / 26695) (Campylobacter pylori) protein is Acyl-[acyl-carrier-protein]--UDP-N-acetylglucosamine O-acyltransferase.